We begin with the raw amino-acid sequence, 507 residues long: Maturase K (507 aa).

This sequence belongs to the intron maturase 2 family. MatK subfamily.

It localises to the plastid. It is found in the chloroplast. In terms of biological role, usually encoded in the trnK tRNA gene intron. Probably assists in splicing its own and other chloroplast group II introns. This chain is Maturase K, found in Browningia hertlingiana (Cactus).